A 195-amino-acid chain; its full sequence is 7-methyl-GTP pyrophosphatase (195 aa).

Aspartate 70 (proton acceptor) is an active-site residue.

This sequence belongs to the Maf family. YceF subfamily. A divalent metal cation serves as cofactor.

The protein localises to the cytoplasm. The catalysed reaction is N(7)-methyl-GTP + H2O = N(7)-methyl-GMP + diphosphate + H(+). Its function is as follows. Nucleoside triphosphate pyrophosphatase that hydrolyzes 7-methyl-GTP (m(7)GTP). May have a dual role in cell division arrest and in preventing the incorporation of modified nucleotides into cellular nucleic acids. The chain is 7-methyl-GTP pyrophosphatase from Shewanella sp. (strain MR-7).